Consider the following 298-residue polypeptide: MDIFISKKMRNFILLAQTNNIARAAEKIHMTASPFGKSIAALEEQIGYTLFTRKDNNISLNKAGQELYQKLFPVYQRLSAIDNEIHNSGRRSREIVIGIDNTYPTIIFDQLISLGDKYEGVTAQPVEFSENGVIDNLFDRQLDFIISPQHVSARVQELENLTISELPPLRLGFLVSRRYEERQEQELLQELPWLQMRFQNRANFEAMIDANMRPCGINPTIIYRPYSFMAKISAVERGHFLTVIPHFAWRLVNPATLKYFDAPHRPMYMQEYLYSIRNHRYTATMLQHIAEDRDGTSH.

Residues 1–61 (MDIFISKKMR…TRKDNNISLN (61 aa)) enclose the HTH lysR-type domain. A DNA-binding region (H-T-H motif) is located at residues 21 to 40 (IARAAEKIHMTASPFGKSIA).

It belongs to the LysR transcriptional regulatory family.

This is an uncharacterized protein from Escherichia coli (strain K12).